We begin with the raw amino-acid sequence, 852 residues long: Serine/threonine-protein phosphatase 6 regulatory subunit 3-A (852 aa).

Disordered stretches follow at residues 610 to 653 (NIAF…VNHE), 714 to 742 (NTKE…VNAS), and 817 to 852 (DSAM…NGPV). A compositionally biased stretch (acidic residues) spans 627–638 (DSEESTDSEEEE). Residues 714–732 (NTKETIRSSSPVEMETSTE) show a composition bias toward polar residues. Residues 828 to 840 (PSSSSQEQRTSEQ) are compositionally biased toward low complexity.

It belongs to the SAPS family.

In terms of biological role, regulatory subunit of protein phosphatase 6 (PP6). May function as a scaffolding PP6 subunit. The polypeptide is Serine/threonine-protein phosphatase 6 regulatory subunit 3-A (ppp6r3-a) (Xenopus laevis (African clawed frog)).